A 561-amino-acid polypeptide reads, in one-letter code: MARKQPHSWLNAVLFGLLLILIHVWGQDSPESSSIRTTHTGQVRGKLDHVRDTKAGVHTFLGIPFAKAPVGPLRFAPPEDPEPWSGVRDGTSHPAMCLQNIDMLDEVGLTDMKMILSSIPMSEDCLYLNIYTPAHAHEGSNLPVMVCIHGGALVIGMASMCDGSLLAVNEDLVVVAIQYRLGVLGFFSTGDEHARGNWGYLDQVAALRWVQQNIAHFGGNPNRVTIFGVSAGGTSVSSHVISPMSQGLFHGAIMESGVALLPDLISETSETVSTTVAKLSGCEATDSETLVRCLRAKSGAEILVINKVFKMIPAVVDGEFLPRHPKELLASEDFHPVPSIIGVNTDEYCCTIPMVMGTAQIIKELSRENLQAVLKDTAAQMMLPPECGDLLMEEYMGNTDDPQTLQIQYAEMMGDFLFVIPALQVAHFQRSHAPVYFYEFQHAPSYFKNVRPPHVKADHADEVPFVFGSFFWGIKVDFTEEEKLLSRRMMKYWANFARHGNPNSEGLPYWPVLDHDEQYLQLDTQPAVDRALKARRLQFWTKTLPQKIQELNGAQKNHAEL.

The N-terminal stretch at 1–26 is a signal peptide; that stretch reads MARKQPHSWLNAVLFGLLLILIHVWG. C97 and C125 are joined by a disulfide. The Acyl-ester intermediate role is filled by S230. The cysteines at positions 282 and 293 are disulfide-linked. Catalysis depends on charge relay system residues E347 and H459.

The protein belongs to the type-B carboxylesterase/lipase family. In terms of tissue distribution, expressed in liver, stomach and kidney.

The protein resides in the microsome. It localises to the endoplasmic reticulum. The enzyme catalyses all-trans-retinyl hexadecanoate + H2O = all-trans-retinol + hexadecanoate + H(+). It catalyses the reaction an O-acyl-(R)-carnitine + H2O = (R)-carnitine + a fatty acid + H(+). Functionally, hydrolase with high activity towards palmitoylcarnitine. Is also active with p-nitrophenylacetate and alpha-naphthylacetate. May also hydrolyze retinyl esters. This is Acylcarnitine hydrolase from Rattus norvegicus (Rat).